The sequence spans 147 residues: D-aminoacyl-tRNA deacylase (147 aa).

The Gly-cisPro motif, important for rejection of L-amino acids motif lies at 137–138 (GP).

It belongs to the DTD family. In terms of assembly, homodimer.

It is found in the cytoplasm. It carries out the reaction glycyl-tRNA(Ala) + H2O = tRNA(Ala) + glycine + H(+). The enzyme catalyses a D-aminoacyl-tRNA + H2O = a tRNA + a D-alpha-amino acid + H(+). Functionally, an aminoacyl-tRNA editing enzyme that deacylates mischarged D-aminoacyl-tRNAs. Also deacylates mischarged glycyl-tRNA(Ala), protecting cells against glycine mischarging by AlaRS. Acts via tRNA-based rather than protein-based catalysis; rejects L-amino acids rather than detecting D-amino acids in the active site. By recycling D-aminoacyl-tRNA to D-amino acids and free tRNA molecules, this enzyme counteracts the toxicity associated with the formation of D-aminoacyl-tRNA entities in vivo and helps enforce protein L-homochirality. The chain is D-aminoacyl-tRNA deacylase from Acinetobacter baumannii (strain AYE).